We begin with the raw amino-acid sequence, 197 residues long: Probable molybdenum cofactor guanylyltransferase (197 aa).

GTP is bound by residues 6–8, Lys18, Asp65, and Asp97; that span reads LAG. Asp97 lines the Mg(2+) pocket.

Belongs to the MobA family. Mg(2+) is required as a cofactor.

It localises to the cytoplasm. It catalyses the reaction Mo-molybdopterin + GTP + H(+) = Mo-molybdopterin guanine dinucleotide + diphosphate. In terms of biological role, transfers a GMP moiety from GTP to Mo-molybdopterin (Mo-MPT) cofactor (Moco or molybdenum cofactor) to form Mo-molybdopterin guanine dinucleotide (Mo-MGD) cofactor. This chain is Probable molybdenum cofactor guanylyltransferase, found in Staphylococcus carnosus (strain TM300).